We begin with the raw amino-acid sequence, 253 residues long: Chemotaxis protein PomA (253 aa).

The next 4 helical transmembrane spans lie at 6 to 26 (LLGL…GGSI), 28 to 48 (MFVD…VVLM), 146 to 166 (FGDV…VAML), and 180 to 200 (AVAL…FFPI). Topologically, residues 201–253 (ADKLSLRRDQETLNRRLIMDGVLAIQDGQNPRVIDSYLKNYLNEGKRALEIDE) are cytoplasmic.

The protein belongs to the MotA family. Each stator complex is composed of 4 PomA and 2 PomB subunits. 2 A subunits and 1 B subunit are thought to form a single ion channel, so that each stator complex contains two channels.

It localises to the cell inner membrane. PomA and PomB comprise the stator element of the flagellar motor complex. Required for rotation of the flagellar motor. Probable transmembrane proton channel. This Vibrio alginolyticus protein is Chemotaxis protein PomA (pomA).